A 224-amino-acid chain; its full sequence is Precorrin-2 dehydrogenase (224 aa).

NAD(+)-binding positions include 26 to 27 (SV) and 47 to 50 (EFSQ).

This sequence belongs to the precorrin-2 dehydrogenase / sirohydrochlorin ferrochelatase family. As to quaternary structure, homodimer.

It catalyses the reaction precorrin-2 + NAD(+) = sirohydrochlorin + NADH + 2 H(+). It functions in the pathway porphyrin-containing compound metabolism; siroheme biosynthesis; sirohydrochlorin from precorrin-2: step 1/1. Its function is as follows. Involved in the archaeal biosynthesis of heme. Catalyzes the oxiation of precorrin-2 into sirohydroclorin. The sequence is that of Precorrin-2 dehydrogenase from Methanosarcina barkeri (strain Fusaro / DSM 804).